Here is a 172-residue protein sequence, read N- to C-terminus: uncharacterized protein (172 aa).

This is an uncharacterized protein from Treponema pallidum (strain Nichols).